Reading from the N-terminus, the 558-residue chain is Putative ABC transporter ATP-binding protein SMU_1934c (558 aa).

2 ABC transporter domains span residues 5–246 (IEFK…GIRE) and 295–527 (FDIQ…ANLK). ATP is bound by residues 39 to 46 (GPSGSGKS) and 328 to 335 (GKNGAGKS).

The protein belongs to the ABC transporter superfamily.

It is found in the cell membrane. In terms of biological role, probably part of an ABC transporter complex. Responsible for energy coupling to the transport system. The protein is Putative ABC transporter ATP-binding protein SMU_1934c (sdcBA) of Streptococcus mutans serotype c (strain ATCC 700610 / UA159).